A 248-amino-acid polypeptide reads, in one-letter code: Anamorsin homolog (248 aa).

The segment at 4 to 130 (FKGLQKSLYI…ETGSSARLSF (127 aa)) is N-terminal SAM-like domain. Residues 131–161 (AKKSPSMNVWKISGDDEELIDEEELLDEEDK) form a linker region. [2Fe-2S] cluster is bound by residues cysteine 172, cysteine 181, cysteine 184, and cysteine 186. A fe-S binding site A region spans residues 172 to 186 (CSTTGKRKACKNCSC). [4Fe-4S] cluster is bound by residues cysteine 209, cysteine 212, cysteine 220, and cysteine 223. 2 short sequence motifs (cx2C motif) span residues 209-212 (CGNC) and 220-223 (CSTC). The interval 209–223 (CGNCYLGDAFRCSTC) is fe-S binding site B.

The protein belongs to the anamorsin family. In terms of assembly, monomer. [2Fe-2S] cluster is required as a cofactor. It depends on [4Fe-4S] cluster as a cofactor.

The protein localises to the cytoplasm. It localises to the mitochondrion intermembrane space. Component of the cytosolic iron-sulfur (Fe-S) protein assembly (CIA) machinery. Required for the maturation of extramitochondrial Fe-S proteins. Part of an electron transfer chain functioning in an early step of cytosolic Fe-S biogenesis, facilitating the de novo assembly of a [4Fe-4S] cluster on the cytosolic Fe-S scaffold complex. Electrons are transferred from NADPH via a FAD- and FMN-containing diflavin oxidoreductase. Together with the diflavin oxidoreductase, also required for the assembly of the diferric tyrosyl radical cofactor of ribonucleotide reductase (RNR), probably by providing electrons for reduction during radical cofactor maturation in the catalytic small subunit. The sequence is that of Anamorsin homolog from Drosophila mojavensis (Fruit fly).